Here is a 342-residue protein sequence, read N- to C-terminus: Protein BMEI1586 (342 aa).

Ser-90 acts as the Proton acceptor in catalysis. Substrate is bound by residues 91–92, Asp-251, and 256–257; these read GS and GT.

The protein belongs to the proline racemase family. Homotetramer.

The enzyme catalyses trans-4-hydroxy-L-proline = cis-4-hydroxy-D-proline. In vitro, catalyzes the epimerization of trans-4-hydroxy-L-proline (t4LHyp) to cis-4-hydroxy-D-proline (c4DHyp) and that of trans-3-hydroxy-L-proline (t3LHyp) to cis-3-hydroxy-D-proline (c3DHyp), albeit with very low efficiency. The physiological substrate may be different. Displays neither proline racemase activity nor t3LHyp dehydratase activity. The sequence is that of Protein BMEI1586 from Brucella melitensis biotype 1 (strain ATCC 23456 / CCUG 17765 / NCTC 10094 / 16M).